We begin with the raw amino-acid sequence, 122 residues long: Ribosome-binding factor A (122 aa).

It belongs to the RbfA family. Monomer. Binds 30S ribosomal subunits, but not 50S ribosomal subunits or 70S ribosomes.

The protein localises to the cytoplasm. Its function is as follows. One of several proteins that assist in the late maturation steps of the functional core of the 30S ribosomal subunit. Associates with free 30S ribosomal subunits (but not with 30S subunits that are part of 70S ribosomes or polysomes). Required for efficient processing of 16S rRNA. May interact with the 5'-terminal helix region of 16S rRNA. This chain is Ribosome-binding factor A, found in Burkholderia mallei (strain NCTC 10229).